Consider the following 256-residue polypeptide: MLTYPNINPIAFSLGPLKVHWYGLMYLIGFVGAWLLGYWRIKHYKLNWNNDQLSDLIFYSALGVILGGRVGYMLFYDFQEFIHHPWVLFKIWEGGMSFHGGLLGVVIAAWLFCRKYGKTFLEVGDFVAPLVPLGLAAGRLGNFINGELWGRVTDVPWGMIYPHVDDQPRHPSQLYEFGLEGVALFILIWCYASKPRQQGRVSALFLMGYAICRLIAESFRQPDSQLGFVAFGWLTMGQVLSIPMLLIGIWLWWAKR.

Transmembrane regions (helical) follow at residues 19 to 39 (VHWY…LGYW), 56 to 76 (LIFY…MLFY), and 91 to 111 (IWEG…AAWL). Arg-139 provides a ligand contact to a 1,2-diacyl-sn-glycero-3-phospho-(1'-sn-glycerol). A helical membrane pass occupies residues 231–251 (FGWLTMGQVLSIPMLLIGIWL).

Belongs to the Lgt family.

Its subcellular location is the cell inner membrane. It catalyses the reaction L-cysteinyl-[prolipoprotein] + a 1,2-diacyl-sn-glycero-3-phospho-(1'-sn-glycerol) = an S-1,2-diacyl-sn-glyceryl-L-cysteinyl-[prolipoprotein] + sn-glycerol 1-phosphate + H(+). It participates in protein modification; lipoprotein biosynthesis (diacylglyceryl transfer). Its function is as follows. Catalyzes the transfer of the diacylglyceryl group from phosphatidylglycerol to the sulfhydryl group of the N-terminal cysteine of a prolipoprotein, the first step in the formation of mature lipoproteins. This is Phosphatidylglycerol--prolipoprotein diacylglyceryl transferase from Legionella pneumophila subsp. pneumophila (strain Philadelphia 1 / ATCC 33152 / DSM 7513).